The primary structure comprises 331 residues: Phosphoribosylformylglycinamidine cyclo-ligase (331 aa).

Belongs to the AIR synthase family.

It localises to the cytoplasm. The enzyme catalyses 2-formamido-N(1)-(5-O-phospho-beta-D-ribosyl)acetamidine + ATP = 5-amino-1-(5-phospho-beta-D-ribosyl)imidazole + ADP + phosphate + H(+). Its pathway is purine metabolism; IMP biosynthesis via de novo pathway; 5-amino-1-(5-phospho-D-ribosyl)imidazole from N(2)-formyl-N(1)-(5-phospho-D-ribosyl)glycinamide: step 2/2. The sequence is that of Phosphoribosylformylglycinamidine cyclo-ligase from Clostridium novyi (strain NT).